We begin with the raw amino-acid sequence, 194 residues long: NAD(P)H-quinone oxidoreductase subunit I (194 aa).

4Fe-4S ferredoxin-type domains are found at residues Gly55–Glu84 and Asn95–Glu124. Positions 64, 67, 70, 74, 104, 107, 110, and 114 each coordinate [4Fe-4S] cluster. The disordered stretch occupies residues Asp173–Ala194. The span at Ala183–Ala194 shows a compositional bias: basic and acidic residues.

The protein belongs to the complex I 23 kDa subunit family. NDH-1 is composed of at least 11 different subunits. Requires [4Fe-4S] cluster as cofactor.

The protein localises to the cellular thylakoid membrane. It catalyses the reaction a plastoquinone + NADH + (n+1) H(+)(in) = a plastoquinol + NAD(+) + n H(+)(out). It carries out the reaction a plastoquinone + NADPH + (n+1) H(+)(in) = a plastoquinol + NADP(+) + n H(+)(out). Its function is as follows. NDH-1 shuttles electrons from an unknown electron donor, via FMN and iron-sulfur (Fe-S) centers, to quinones in the respiratory and/or the photosynthetic chain. The immediate electron acceptor for the enzyme in this species is believed to be plastoquinone. Couples the redox reaction to proton translocation, and thus conserves the redox energy in a proton gradient. In Nostoc sp. (strain PCC 7120 / SAG 25.82 / UTEX 2576), this protein is NAD(P)H-quinone oxidoreductase subunit I.